The sequence spans 554 residues: RecBCD enzyme subunit RecD (554 aa).

155 to 162 (GGPGTGKT) provides a ligand contact to ATP.

The protein belongs to the RecD family. As to quaternary structure, heterotrimer of RecB, RecC and RecD. All subunits contribute to DNA-binding.

It catalyses the reaction Couples ATP hydrolysis with the unwinding of duplex DNA at the replication fork by translocating in the 5'-3' direction. This creates two antiparallel DNA single strands (ssDNA). The leading ssDNA polymer is the template for DNA polymerase III holoenzyme which synthesizes a continuous strand.. The catalysed reaction is ATP + H2O = ADP + phosphate + H(+). Functionally, a helicase/nuclease that prepares dsDNA breaks (DSB) for recombinational DNA repair. Binds to DSBs and unwinds DNA via a highly rapid and processive ATP-dependent bidirectional helicase activity. Holoenzyme degrades any linearized DNA that is unable to undergo homologous recombination. In the holoenzyme this subunit has ssDNA-dependent ATPase and 5'-3' helicase activity. When added to pre-assembled RecBC greatly stimulates nuclease activity and augments holoenzyme processivity. Unlike the case in E.coli, suppresses RecA-dependent homologous recombination, is instead required for single-strand annealing pathway repair of DSB. In Mycolicibacterium smegmatis (strain ATCC 700084 / mc(2)155) (Mycobacterium smegmatis), this protein is RecBCD enzyme subunit RecD.